The chain runs to 269 residues: Adenylate kinase (269 aa).

61–66 is an ATP binding site; the sequence is GAGKGT. The segment at 81-110 is NMP; it reads ATGDMLREQVARQTELGKAAKQIMDQGGLV. Residues Thr82, Arg87, 108 to 110, 137 to 140, and Gln144 contribute to the AMP site; these read GLV and GFPR. The interval 178 to 215 is LID; it reads GRLVHPASGRSYHKEFNPPKKPMTDDITGEPLIQRSDD. ATP contacts are provided by residues Arg179 and 188-189; that span reads SY. Arg212 and Arg223 together coordinate AMP. Gln251 is a binding site for ATP.

Belongs to the adenylate kinase family. AK2 subfamily. As to quaternary structure, monomer.

Its subcellular location is the cytoplasm. The protein resides in the cytosol. It is found in the mitochondrion intermembrane space. The catalysed reaction is AMP + ATP = 2 ADP. In terms of biological role, catalyzes the reversible transfer of the terminal phosphate group between ATP and AMP. Plays an important role in cellular energy homeostasis and in adenine nucleotide metabolism. Adenylate kinase activity is critical for regulation of the phosphate utilization and the AMP de novo biosynthesis pathways. The protein is Adenylate kinase of Cryptococcus neoformans var. neoformans serotype D (strain B-3501A) (Filobasidiella neoformans).